Here is a 236-residue protein sequence, read N- to C-terminus: Phosphoribosylaminoimidazole-succinocarboxamide synthase (236 aa).

Belongs to the SAICAR synthetase family.

It catalyses the reaction 5-amino-1-(5-phospho-D-ribosyl)imidazole-4-carboxylate + L-aspartate + ATP = (2S)-2-[5-amino-1-(5-phospho-beta-D-ribosyl)imidazole-4-carboxamido]succinate + ADP + phosphate + 2 H(+). It functions in the pathway purine metabolism; IMP biosynthesis via de novo pathway; 5-amino-1-(5-phospho-D-ribosyl)imidazole-4-carboxamide from 5-amino-1-(5-phospho-D-ribosyl)imidazole-4-carboxylate: step 1/2. The chain is Phosphoribosylaminoimidazole-succinocarboxamide synthase (purC) from Lactococcus lactis subsp. lactis (strain IL1403) (Streptococcus lactis).